Here is a 241-residue protein sequence, read N- to C-terminus: NH(3)-dependent NAD(+) synthetase (241 aa).

ATP is bound at residue 29–36 (GISGGIDS). Aspartate 35 contacts Mg(2+). Arginine 110 lines the deamido-NAD(+) pocket. Residue glutamate 135 coordinates Mg(2+). The deamido-NAD(+) site is built by lysine 143 and aspartate 150. 2 residues coordinate ATP: lysine 159 and serine 181. Position 226–227 (226–227 (HK)) interacts with deamido-NAD(+).

The protein belongs to the NAD synthetase family. As to quaternary structure, homodimer.

The enzyme catalyses deamido-NAD(+) + NH4(+) + ATP = AMP + diphosphate + NAD(+) + H(+). It functions in the pathway cofactor biosynthesis; NAD(+) biosynthesis; NAD(+) from deamido-NAD(+) (ammonia route): step 1/1. Catalyzes the ATP-dependent amidation of deamido-NAD to form NAD. Uses ammonia as a nitrogen source. The polypeptide is NH(3)-dependent NAD(+) synthetase (Finegoldia magna (strain ATCC 29328 / DSM 20472 / WAL 2508) (Peptostreptococcus magnus)).